Here is a 356-residue protein sequence, read N- to C-terminus: 1-deoxy-D-xylulose 5-phosphate reductoisomerase (356 aa).

Residues threonine 7, glycine 8, serine 9, isoleucine 10, glycine 31, asparagine 33, and asparagine 111 each coordinate NADPH. Residue lysine 112 participates in 1-deoxy-D-xylulose 5-phosphate binding. Glutamate 113 is an NADPH binding site. Aspartate 131 contributes to the Mn(2+) binding site. 1-deoxy-D-xylulose 5-phosphate-binding residues include serine 132, glutamate 133, serine 155, and histidine 178. A Mn(2+)-binding site is contributed by glutamate 133. Glycine 184 contacts NADPH. 4 residues coordinate 1-deoxy-D-xylulose 5-phosphate: serine 191, asparagine 196, lysine 197, and glutamate 200. Mn(2+) is bound at residue glutamate 200.

This sequence belongs to the DXR family. The cofactor is Mg(2+). Mn(2+) is required as a cofactor.

It catalyses the reaction 2-C-methyl-D-erythritol 4-phosphate + NADP(+) = 1-deoxy-D-xylulose 5-phosphate + NADPH + H(+). Its pathway is isoprenoid biosynthesis; isopentenyl diphosphate biosynthesis via DXP pathway; isopentenyl diphosphate from 1-deoxy-D-xylulose 5-phosphate: step 1/6. Catalyzes the NADPH-dependent rearrangement and reduction of 1-deoxy-D-xylulose-5-phosphate (DXP) to 2-C-methyl-D-erythritol 4-phosphate (MEP). The protein is 1-deoxy-D-xylulose 5-phosphate reductoisomerase of Campylobacter jejuni subsp. jejuni serotype O:23/36 (strain 81-176).